A 70-amino-acid polypeptide reads, in one-letter code: Large ribosomal subunit protein bL31 (70 aa).

4 residues coordinate Zn(2+): Cys-17, Cys-19, Cys-37, and Cys-40.

It belongs to the bacterial ribosomal protein bL31 family. Type A subfamily. In terms of assembly, part of the 50S ribosomal subunit. The cofactor is Zn(2+).

Functionally, binds the 23S rRNA. In Clostridium kluyveri (strain NBRC 12016), this protein is Large ribosomal subunit protein bL31.